A 225-amino-acid polypeptide reads, in one-letter code: Putative N-acetylmannosamine-6-phosphate 2-epimerase (225 aa).

This sequence belongs to the NanE family.

The catalysed reaction is an N-acyl-D-glucosamine 6-phosphate = an N-acyl-D-mannosamine 6-phosphate. It functions in the pathway amino-sugar metabolism; N-acetylneuraminate degradation; D-fructose 6-phosphate from N-acetylneuraminate: step 3/5. Converts N-acetylmannosamine-6-phosphate (ManNAc-6-P) to N-acetylglucosamine-6-phosphate (GlcNAc-6-P). In Vibrio vulnificus (strain CMCP6), this protein is Putative N-acetylmannosamine-6-phosphate 2-epimerase.